We begin with the raw amino-acid sequence, 347 residues long: Transcription factor JunB (347 aa).

Residues lysine 4, lysine 33, and lysine 36 each participate in a glycyl lysine isopeptide (Lys-Gly) (interchain with G-Cter in SUMO2) cross-link. Positions 50–77 are disordered; that stretch reads LKAPGARGPGPEGNGGGSYFSSQGSDTG. Residues 56-67 are compositionally biased toward gly residues; that stretch reads RGPGPEGNGGGS. Polar residues predominate over residues 68–77; sequence YFSSQGSDTG. A Glycyl lysine isopeptide (Lys-Gly) (interchain with G-Cter in SUMO2) cross-link involves residue lysine 81. Phosphothreonine occurs at positions 102 and 104. Serine 117 is subject to Phosphoserine. Lysine 141 participates in a covalent cross-link: Glycyl lysine isopeptide (Lys-Gly) (interchain with G-Cter in SUMO2). The residue at position 240 (lysine 240) is an N6-acetyllysine; alternate. Lysine 240 is covalently cross-linked (Glycyl lysine isopeptide (Lys-Gly) (interchain with G-Cter in SUMO1); alternate). Residue lysine 240 forms a Glycyl lysine isopeptide (Lys-Gly) (interchain with G-Cter in SUMO2); alternate linkage. Positions 241–253 are enriched in basic and acidic residues; sequence EEPQTVPEARSRD. Residues 241-260 are disordered; it reads EEPQTVPEARSRDATPPVSP. Serine 251 carries the phosphoserine modification. A Phosphothreonine modification is found at threonine 255. Serine 259 carries the phosphoserine modification. The segment at 268-295 is basic motif; it reads RIKVERKRLRNRLAATKCRKRKLERIAR. Residues 268 to 331 form the bZIP domain; sequence RIKVERKRLR…AQLKQKVMTH (64 aa). Positions 296–324 are leucine-zipper; that stretch reads LEDKVKTLKAENAGLSSTAGLLREQVAQL. A Glycyl lysine isopeptide (Lys-Gly) (interchain with G-Cter in SUMO2) cross-link involves residue lysine 343.

It belongs to the bZIP family. Jun subfamily. As to quaternary structure, binds DNA as a homodimer or as a heterodimer with another member of the Jun/Fos family. Component of an AP-1 transcription factor complex composed of JUN-FOS heterodimers. As part of the AP-1 transcription factor complex, forms heterodimers with FOSB, thereby binding to the AP-1 consensus sequence and stimulating transcription. Interacts with ITCH (via its WW domains). Post-translationally, ubiquitinated by ITCH, leading to its degradation.

It localises to the nucleus. Transcription factor involved in regulating gene activity following the primary growth factor response. Binds to the DNA sequence 5'-TGA[GC]TCA-3'. Heterodimerizes with proteins of the FOS family to form an AP-1 transcription complex, thereby enhancing its DNA binding activity to an AP-1 consensus sequence and its transcriptional activity. This is Transcription factor JunB (JUNB) from Bos taurus (Bovine).